A 491-amino-acid chain; its full sequence is Glycylpeptide N-tetradecanoyltransferase (491 aa).

45-48 (HKFW) contacts tetradecanoyl-CoA. A disordered region spans residues 53-79 (VPQITGSGASAPMEEGPIDDPKTPADV). Tetradecanoyl-CoA-binding positions include 182–184 (LCV) and 190–194 (SKRLA). The active-site Proton acceptor; via carboxylate is Leu-491.

Belongs to the NMT family. As to quaternary structure, monomer.

The protein resides in the cytoplasm. It carries out the reaction N-terminal glycyl-[protein] + tetradecanoyl-CoA = N-tetradecanoylglycyl-[protein] + CoA + H(+). Its function is as follows. Adds a myristoyl group to the N-terminal glycine residue of certain cellular proteins. In Cryptococcus neoformans (Filobasidiella neoformans), this protein is Glycylpeptide N-tetradecanoyltransferase.